The chain runs to 360 residues: Peptide chain release factor 1 (360 aa).

At Gln237 the chain carries N5-methylglutamine.

The protein belongs to the prokaryotic/mitochondrial release factor family. In terms of processing, methylated by PrmC. Methylation increases the termination efficiency of RF1.

It localises to the cytoplasm. In terms of biological role, peptide chain release factor 1 directs the termination of translation in response to the peptide chain termination codons UAG and UAA. The chain is Peptide chain release factor 1 (prfA) from Pseudomonas aeruginosa (strain ATCC 15692 / DSM 22644 / CIP 104116 / JCM 14847 / LMG 12228 / 1C / PRS 101 / PAO1).